The chain runs to 311 residues: HPr kinase/phosphorylase (311 aa).

Active-site residues include histidine 138 and lysine 159. Glycine 153 to serine 160 provides a ligand contact to ATP. Residue serine 160 coordinates Mg(2+). The active-site Proton acceptor; for phosphorylation activity. Proton donor; for dephosphorylation activity is the aspartate 177. The tract at residues leucine 201–aspartate 210 is important for the catalytic mechanism of both phosphorylation and dephosphorylation. Residue glutamate 202 participates in Mg(2+) binding. Residue arginine 243 is part of the active site. The segment at proline 264–arginine 269 is important for the catalytic mechanism of dephosphorylation.

The protein belongs to the HPrK/P family. Homohexamer. Requires Mg(2+) as cofactor.

The catalysed reaction is [HPr protein]-L-serine + ATP = [HPr protein]-O-phospho-L-serine + ADP + H(+). It catalyses the reaction [HPr protein]-O-phospho-L-serine + phosphate + H(+) = [HPr protein]-L-serine + diphosphate. Functionally, catalyzes the ATP- as well as the pyrophosphate-dependent phosphorylation of a specific serine residue in HPr, a phosphocarrier protein of the phosphoenolpyruvate-dependent sugar phosphotransferase system (PTS). HprK/P also catalyzes the pyrophosphate-producing, inorganic phosphate-dependent dephosphorylation (phosphorolysis) of seryl-phosphorylated HPr (P-Ser-HPr). The two antagonistic activities of HprK/P are regulated by several intracellular metabolites, which change their concentration in response to the absence or presence of rapidly metabolisable carbon sources (glucose, fructose, etc.) in the growth medium. Therefore, by controlling the phosphorylation state of HPr, HPrK/P is a sensor enzyme that plays a major role in the regulation of carbon metabolism and sugar transport: it mediates carbon catabolite repression (CCR), and regulates PTS-catalyzed carbohydrate uptake and inducer exclusion. In Streptococcus sanguinis (strain SK36), this protein is HPr kinase/phosphorylase.